The chain runs to 253 residues: Ethylene-responsive transcription factor RAP2-11 (253 aa).

Positions 21–78 (KFVGVRQRPSGKWVAEIKDTTQKIRMWLGTFETAEEAARAYDEAACLLRGSNTRTNFA) form a DNA-binding region, AP2/ERF.

It belongs to the AP2/ERF transcription factor family. ERF subfamily.

Its subcellular location is the nucleus. In terms of biological role, probably acts as a transcriptional activator. Binds to the GCC-box pathogenesis-related promoter element. May be involved in the regulation of gene expression by stress factors and by components of stress signal transduction pathways. The sequence is that of Ethylene-responsive transcription factor RAP2-11 (RAP2-11) from Arabidopsis thaliana (Mouse-ear cress).